Reading from the N-terminus, the 138-residue chain is Centromere protein S (138 aa).

M1 carries the N-acetylmethionine modification. The tract at residues 110–138 (RKAQKKKKSEDGSKNSRQPAEAGVVESEN) is disordered.

It belongs to the TAF9 family. CENP-S/MHF1 subfamily. Heterodimer with CENPX, sometimes called MHF; this interaction stabilizes both partners. MHF heterodimers can assemble to form tetrameric structures. MHF also coassemble with CENPT-CENPW heterodimers at centromeres to form the tetrameric CENP-T-W-S-X complex. Forms a discrete complex with FANCM and CENPX, called FANCM-MHF; this interaction, probably mediated by direct binding between CENPS and FANCM, leads to synergistic activation of double-stranded DNA binding and strongly stimulates FANCM-mediated DNA remodeling. Recruited by FANCM to the Fanconi anemia (FA) core complex, which consists of CENPS, CENPX, FANCA, FANCB, FANCC, FANCE, FANCF, FANCG, FANCL, FANCM, FAAP24 and FAAP100. The FA core complex associates with Bloom syndrome (BLM) complex, which consists of at least BLM, DNA topoisomerase 3-alpha (TOP3A), RMI1/BLAP75, RPA1/RPA70 and RPA2/RPA32. The super complex between FA and BLM is called BRAFT. Component of the CENPA-CAD complex, composed of CENPI, CENPK, CENPL, CENPO, CENPP, CENPQ, CENPR and CENPS. The CENPA-CAD complex is probably recruited on centromeres by the CENPA-NAC complex, composed of at least CENPA, CENPC, CENPH, CENPM, CENPN, CENPT and CENPU. Ubiquitously expressed.

The protein resides in the nucleus. It is found in the chromosome. It localises to the centromere. The protein localises to the kinetochore. DNA-binding component of the Fanconi anemia (FA) core complex. Required for the normal activation of the FA pathway, leading to monoubiquitination of the FANCI-FANCD2 complex in response to DNA damage, cellular resistance to DNA cross-linking drugs, and prevention of chromosomal breakage. In complex with CENPX (MHF heterodimer), crucial cofactor for FANCM in both binding and ATP-dependent remodeling of DNA. Stabilizes FANCM. In complex with CENPX and FANCM (but not other FANC proteins), rapidly recruited to blocked forks and promotes gene conversion at blocked replication forks. In complex with CENPT, CENPW and CENPX (CENP-T-W-S-X heterotetramer), involved in the formation of a functional kinetochore outer plate, which is essential for kinetochore-microtubule attachment and faithful mitotic progression. As a component of MHF and CENP-T-W-S-X complexes, binds DNA and bends it to form a nucleosome-like structure. DNA-binding function is fulfilled in the presence of CENPX, with the following preference for DNA substates: Holliday junction &gt; double-stranded &gt; splay arm &gt; single-stranded. Does not bind DNA on its own. In Homo sapiens (Human), this protein is Centromere protein S (CENPS).